The sequence spans 340 residues: TATA-box-binding protein (340 aa).

Positions 1–78 (MNLNSPAVSM…HSLQGSSMQM (78 aa)) are disordered. The span at 57-68 (PQSIQPMQSQQM) shows a compositional bias: low complexity. Positions 69 to 78 (HSLQGSSMQM) are enriched in polar residues. 2 tandem repeats follow at residues 168 to 244 (LQNI…ARIV) and 258 to 335 (VQNM…YPIL).

Belongs to the TBP family. Component of the TFIID basal transcription factor complex, composed of TATA-box-binding protein tbp-1, and a number of TBP-associated factors (TAFs). Binds DNA as monomer.

The protein localises to the nucleus. Functionally, the TFIID basal transcription factor complex plays a major role in the initiation of RNA polymerase II (Pol II)-dependent transcription. TFIID recognizes and binds promoters via its subunit tbp-1, a TATA-box-binding protein, and promotes assembly of the pre-initiation complex (PIC). The TFIID complex consists of tbp-1 and TBP-associated factors (TAFs). General transcription factor that functions at the core of the TFIID complex. This Caenorhabditis elegans protein is TATA-box-binding protein (tbp-1).